Here is a 339-residue protein sequence, read N- to C-terminus: Dihydroorotate dehydrogenase (quinone) (339 aa).

FMN contacts are provided by residues 62–66 (AGMDK) and Thr-86. Lys-66 provides a ligand contact to substrate. 111–115 (NRMGF) serves as a coordination point for substrate. FMN is bound by residues Asn-139 and Asn-172. Asn-172 contacts substrate. Ser-175 acts as the Nucleophile in catalysis. Residue Asn-177 coordinates substrate. The FMN site is built by Lys-217 and Thr-245. 246–247 (NT) lines the substrate pocket. Residues Gly-268, Gly-297, and 318-319 (YS) contribute to the FMN site.

Belongs to the dihydroorotate dehydrogenase family. Type 2 subfamily. In terms of assembly, monomer. Requires FMN as cofactor.

Its subcellular location is the cell membrane. The catalysed reaction is (S)-dihydroorotate + a quinone = orotate + a quinol. Its pathway is pyrimidine metabolism; UMP biosynthesis via de novo pathway; orotate from (S)-dihydroorotate (quinone route): step 1/1. In terms of biological role, catalyzes the conversion of dihydroorotate to orotate with quinone as electron acceptor. This chain is Dihydroorotate dehydrogenase (quinone), found in Shewanella baltica (strain OS155 / ATCC BAA-1091).